We begin with the raw amino-acid sequence, 247 residues long: DNA repair protein RecO (247 aa).

This sequence belongs to the RecO family.

Involved in DNA repair and RecF pathway recombination. The sequence is that of DNA repair protein RecO from Methylocella silvestris (strain DSM 15510 / CIP 108128 / LMG 27833 / NCIMB 13906 / BL2).